Here is a 116-residue protein sequence, read N- to C-terminus: Cation channel sperm-associated auxiliary subunit TMEM262 (116 aa).

Residues 1-16 (MWLQDRIATFFFPKGM) lie on the Cytoplasmic side of the membrane. Residues 17–38 (MLTTAALMLFFLHLGIFIRDVH) form a helical membrane-spanning segment. Topologically, residues 39–51 (NFCITYHYDHMSF) are extracellular. The helical transmembrane segment at 52 to 72 (HYTVVLMFSQVISICWAAMGS) threads the bilayer. Residues 73-84 (LYAEMTENKYVC) lie on the Cytoplasmic side of the membrane. The helical transmembrane segment at 85–107 (FSALTILMLNGAMFFNRLSLEFL) threads the bilayer. The Extracellular segment spans residues 108–116 (AIEYREEHH).

As to quaternary structure, component of the CatSper complex or CatSpermasome composed of the core pore-forming members CATSPER1, CATSPER2, CATSPER3 and CATSPER4 as well as auxiliary members CATSPERB, CATSPERG, CATSPERD, CATSPERE, CATSPERZ, C2CD6/CATSPERT, TMEM249, TMEM262 and EFCAB9. HSPA1 may be an additional auxiliary complex member. The core complex members CATSPER1, CATSPER2, CATSPER3 and CATSPER4 form a heterotetrameric channel. The auxiliary CATSPERB, CATSPERG, CATSPERD and CATSPERE subunits form a pavilion-like structure over the pore which stabilizes the complex through interactions with CATSPER4, CATSPER3, CATSPER1 and CATSPER2 respectively. TMEM262/CATSPERH interacts with CATSPERB, further stabilizing the complex. C2CD6/CATSPERT interacts at least with CATSPERD and is required for targeting the CatSper complex in the flagellar membrane.

It is found in the cell projection. Its subcellular location is the cilium. It localises to the flagellum membrane. Functionally, auxiliary component of the CatSper complex, a complex involved in sperm cell hyperactivation. This Homo sapiens (Human) protein is Cation channel sperm-associated auxiliary subunit TMEM262.